A 977-amino-acid polypeptide reads, in one-letter code: Poly(ADP-ribose) glycohydrolase (977 aa).

Residues 1–69 (MSAGPGCEPC…LGRAGQHRGS (69 aa)) are disordered. The interval 1–457 (MSAGPGCEPC…LSPDKKWLGT (457 aa)) is A-domain. Positions 10-16 (CTKRPRW) match the Nuclear localization signal motif. A compositionally biased stretch (low complexity) spans 17–29 (DAAATSPPAASDA). Residue Ser69 is modified to Phosphoserine. The short motif at 77-84 (QKTITSWM) is the PIP-box (PCNA interacting peptide) element. Phosphoserine occurs at positions 138 and 198. The segment at 184 to 407 (SNANVDQSSP…CRNSKQHGRK (224 aa)) is disordered. Basic and acidic residues-rich tracts occupy residues 192–207 (SPKD…ESRD) and 223–234 (TMEDEQGREARS). A Phosphothreonine modification is found at Thr200. Phosphoserine is present on residues Ser262, Ser265, Ser287, Ser292, Ser299, Ser303, and Ser317. Residues 280–291 (NRLNRQESSLGN) are compositionally biased toward polar residues. A compositionally biased stretch (acidic residues) spans 317 to 332 (SEADEETSPGFDEQED). The segment covering 333-343 (SSSAQTANKPS) has biased composition (polar residues). The residue at position 341 (Lys341) is an N6-acetyllysine. A compositionally biased stretch (basic and acidic residues) spans 346-356 (QPREADTELRK). Ser449 bears the Phosphoserine mark. Residues 611-796 (QPIPLLKQKM…TEQYSEYTGY (186 aa)) are catalytic. 727–728 (IE) lines the substrate pocket. Asp738 is a catalytic residue. Substrate-binding residues include Asn741 and Gln755. Residues Glu756 and Glu757 contribute to the active site. Substrate is bound by residues Tyr796 and 870-875 (NWGCGA).

This sequence belongs to the poly(ADP-ribose) glycohydrolase family. Interacts with PCNA. Interacts with NUDT5.

The protein localises to the nucleus. It carries out the reaction [(1''-&gt;2')-ADP-alpha-D-ribose](n) + H2O = [(1''-&gt;2')-ADP-alpha-D-ribose](n-1) + ADP-D-ribose. Poly(ADP-ribose) glycohydrolase that degrades poly(ADP-ribose) by hydrolyzing the ribose-ribose bonds present in poly(ADP-ribose). PARG acts both as an endo- and exoglycosidase, releasing poly(ADP-ribose) of different length as well as ADP-ribose monomers. It is however unable to cleave the ester bond between the terminal ADP-ribose and ADP-ribosylated residues, leaving proteins that are mono-ADP-ribosylated. Poly(ADP-ribose) is synthesized after DNA damage is only present transiently and is rapidly degraded by PARG. Required to prevent detrimental accumulation of poly(ADP-ribose) upon prolonged replicative stress, while it is not required for recovery from transient replicative stress. Responsible for the prevalence of mono-ADP-ribosylated proteins in cells, thanks to its ability to degrade poly(ADP-ribose) without cleaving the terminal protein-ribose bond. Required for retinoid acid-dependent gene transactivation, probably by removing poly(ADP-ribose) from histone demethylase KDM4D, allowing chromatin derepression at RAR-dependent gene promoters. Involved in the synthesis of ATP in the nucleus, together with PARP1, NMNAT1 and NUDT5. Nuclear ATP generation is required for extensive chromatin remodeling events that are energy-consuming. The protein is Poly(ADP-ribose) glycohydrolase of Bos taurus (Bovine).